The chain runs to 417 residues: Serine hydroxymethyltransferase 1 (417 aa).

(6S)-5,6,7,8-tetrahydrofolate contacts are provided by residues L121 and 125 to 127; that span reads GHL. K229 carries the N6-(pyridoxal phosphate)lysine modification. 355 to 357 serves as a coordination point for (6S)-5,6,7,8-tetrahydrofolate; that stretch reads SPF.

The protein belongs to the SHMT family. In terms of assembly, homodimer. Requires pyridoxal 5'-phosphate as cofactor.

The protein resides in the cytoplasm. It carries out the reaction (6R)-5,10-methylene-5,6,7,8-tetrahydrofolate + glycine + H2O = (6S)-5,6,7,8-tetrahydrofolate + L-serine. The protein operates within one-carbon metabolism; tetrahydrofolate interconversion. It participates in amino-acid biosynthesis; glycine biosynthesis; glycine from L-serine: step 1/1. Catalyzes the reversible interconversion of serine and glycine with tetrahydrofolate (THF) serving as the one-carbon carrier. This reaction serves as the major source of one-carbon groups required for the biosynthesis of purines, thymidylate, methionine, and other important biomolecules. Also exhibits THF-independent aldolase activity toward beta-hydroxyamino acids, producing glycine and aldehydes, via a retro-aldol mechanism. The protein is Serine hydroxymethyltransferase 1 of Pectobacterium atrosepticum (strain SCRI 1043 / ATCC BAA-672) (Erwinia carotovora subsp. atroseptica).